The sequence spans 257 residues: Aspartate/glutamate leucyltransferase (257 aa).

Belongs to the R-transferase family. Bpt subfamily.

Its subcellular location is the cytoplasm. It catalyses the reaction N-terminal L-glutamyl-[protein] + L-leucyl-tRNA(Leu) = N-terminal L-leucyl-L-glutamyl-[protein] + tRNA(Leu) + H(+). The enzyme catalyses N-terminal L-aspartyl-[protein] + L-leucyl-tRNA(Leu) = N-terminal L-leucyl-L-aspartyl-[protein] + tRNA(Leu) + H(+). Functionally, functions in the N-end rule pathway of protein degradation where it conjugates Leu from its aminoacyl-tRNA to the N-termini of proteins containing an N-terminal aspartate or glutamate. This Rhodopseudomonas palustris (strain HaA2) protein is Aspartate/glutamate leucyltransferase.